Consider the following 747-residue polypeptide: DNA-directed RNA polymerase subunit beta' (747 aa).

Residues cysteine 70, cysteine 72, cysteine 97, and cysteine 100 each coordinate Zn(2+). Positions 502, 504, and 506 each coordinate Mg(2+).

This sequence belongs to the RNA polymerase beta' chain family. RpoC1 subfamily. In plastids the minimal PEP RNA polymerase catalytic core is composed of four subunits: alpha, beta, beta', and beta''. When a (nuclear-encoded) sigma factor is associated with the core the holoenzyme is formed, which can initiate transcription. Mg(2+) is required as a cofactor. Requires Zn(2+) as cofactor.

It localises to the plastid. The protein resides in the chloroplast. It catalyses the reaction RNA(n) + a ribonucleoside 5'-triphosphate = RNA(n+1) + diphosphate. Its function is as follows. DNA-dependent RNA polymerase catalyzes the transcription of DNA into RNA using the four ribonucleoside triphosphates as substrates. The sequence is that of DNA-directed RNA polymerase subunit beta' from Gnetum parvifolium (Small-leaved jointfir).